A 95-amino-acid chain; its full sequence is Co-chaperonin GroES (95 aa).

The protein belongs to the GroES chaperonin family. In terms of assembly, heptamer of 7 subunits arranged in a ring. Interacts with the chaperonin GroEL.

The protein resides in the cytoplasm. Functionally, together with the chaperonin GroEL, plays an essential role in assisting protein folding. The GroEL-GroES system forms a nano-cage that allows encapsulation of the non-native substrate proteins and provides a physical environment optimized to promote and accelerate protein folding. GroES binds to the apical surface of the GroEL ring, thereby capping the opening of the GroEL channel. The sequence is that of Co-chaperonin GroES from Pelobacter propionicus (strain DSM 2379 / NBRC 103807 / OttBd1).